A 346-amino-acid chain; its full sequence is Dihydroorotase (346 aa).

Zn(2+)-binding residues include His13 and His15. Substrate is bound by residues 15–17 (HLR) and Asn41. Residues Lys99, His136, and His174 each contribute to the Zn(2+) site. N6-carboxylysine is present on Lys99. His136 lines the substrate pocket. Residue Leu219 participates in substrate binding. Asp247 provides a ligand contact to Zn(2+). Asp247 is an active-site residue. Residues His251 and Ala263 each contribute to the substrate site.

Belongs to the metallo-dependent hydrolases superfamily. DHOase family. Class II DHOase subfamily. As to quaternary structure, homodimer. Requires Zn(2+) as cofactor.

The enzyme catalyses (S)-dihydroorotate + H2O = N-carbamoyl-L-aspartate + H(+). It participates in pyrimidine metabolism; UMP biosynthesis via de novo pathway; (S)-dihydroorotate from bicarbonate: step 3/3. Functionally, catalyzes the reversible cyclization of carbamoyl aspartate to dihydroorotate. The polypeptide is Dihydroorotase (Rhizobium rhizogenes (strain K84 / ATCC BAA-868) (Agrobacterium radiobacter)).